The sequence spans 304 residues: UDP-N-acetylenolpyruvoylglucosamine reductase (304 aa).

Residues 33 to 198 (RVGGPVDILL…ITATFCFESG (166 aa)) enclose the FAD-binding PCMH-type domain. Arg177 is an active-site residue. Ser227 functions as the Proton donor in the catalytic mechanism. Glu297 is a catalytic residue.

It belongs to the MurB family. The cofactor is FAD.

The protein localises to the cytoplasm. It carries out the reaction UDP-N-acetyl-alpha-D-muramate + NADP(+) = UDP-N-acetyl-3-O-(1-carboxyvinyl)-alpha-D-glucosamine + NADPH + H(+). The protein operates within cell wall biogenesis; peptidoglycan biosynthesis. Its function is as follows. Cell wall formation. The protein is UDP-N-acetylenolpyruvoylglucosamine reductase of Clostridium botulinum (strain Alaska E43 / Type E3).